A 242-amino-acid chain; its full sequence is Pyridoxine 5'-phosphate synthase (242 aa).

N6 is a binding site for 3-amino-2-oxopropyl phosphate. 8–9 (DH) contributes to the 1-deoxy-D-xylulose 5-phosphate binding site. R17 lines the 3-amino-2-oxopropyl phosphate pocket. H42 serves as the catalytic Proton acceptor. Residues R44 and H49 each coordinate 1-deoxy-D-xylulose 5-phosphate. E69 (proton acceptor) is an active-site residue. Residue T99 participates in 1-deoxy-D-xylulose 5-phosphate binding. The active-site Proton donor is the H193. 3-amino-2-oxopropyl phosphate contacts are provided by residues G194 and 217–218 (GH).

This sequence belongs to the PNP synthase family. As to quaternary structure, homooctamer; tetramer of dimers.

It is found in the cytoplasm. It catalyses the reaction 3-amino-2-oxopropyl phosphate + 1-deoxy-D-xylulose 5-phosphate = pyridoxine 5'-phosphate + phosphate + 2 H2O + H(+). It functions in the pathway cofactor biosynthesis; pyridoxine 5'-phosphate biosynthesis; pyridoxine 5'-phosphate from D-erythrose 4-phosphate: step 5/5. Catalyzes the complicated ring closure reaction between the two acyclic compounds 1-deoxy-D-xylulose-5-phosphate (DXP) and 3-amino-2-oxopropyl phosphate (1-amino-acetone-3-phosphate or AAP) to form pyridoxine 5'-phosphate (PNP) and inorganic phosphate. The protein is Pyridoxine 5'-phosphate synthase of Aquifex aeolicus (strain VF5).